The chain runs to 216 residues: Pyridoxine/pyridoxamine 5'-phosphate oxidase (216 aa).

Substrate-binding positions include 9–12 (RLSY) and R67. Residues 62–67 (RIVLLR), 77–78 (YT), K84, and Q106 contribute to the FMN site. Substrate-binding residues include Y124, R128, and S132. FMN contacts are provided by residues 142–143 (QS) and W188. Residue 194-196 (RMH) participates in substrate binding. Position 198 (R198) interacts with FMN.

This sequence belongs to the pyridoxamine 5'-phosphate oxidase family. Homodimer. The cofactor is FMN.

It catalyses the reaction pyridoxamine 5'-phosphate + O2 + H2O = pyridoxal 5'-phosphate + H2O2 + NH4(+). The enzyme catalyses pyridoxine 5'-phosphate + O2 = pyridoxal 5'-phosphate + H2O2. It functions in the pathway cofactor metabolism; pyridoxal 5'-phosphate salvage; pyridoxal 5'-phosphate from pyridoxamine 5'-phosphate: step 1/1. It participates in cofactor metabolism; pyridoxal 5'-phosphate salvage; pyridoxal 5'-phosphate from pyridoxine 5'-phosphate: step 1/1. In terms of biological role, catalyzes the oxidation of either pyridoxine 5'-phosphate (PNP) or pyridoxamine 5'-phosphate (PMP) into pyridoxal 5'-phosphate (PLP). The chain is Pyridoxine/pyridoxamine 5'-phosphate oxidase from Psychrobacter cryohalolentis (strain ATCC BAA-1226 / DSM 17306 / VKM B-2378 / K5).